Here is a 708-residue protein sequence, read N- to C-terminus: Polyribonucleotide nucleotidyltransferase (708 aa).

Mg(2+)-binding residues include D485 and D491. The KH domain maps to 552–611; that stretch reads PKTYIMSIPPDKIRDVIGSGGKVINKIIAETGVKIDIKEDGKIFVMSEDSEGAKKALKII. In terms of domain architecture, S1 motif spans 621–689; it reads GEIYLGKVTK…NQGRINLSRK (69 aa). The segment at 689–708 is disordered; it reads KDAIKDSEKKEQNEKDVQKK.

This sequence belongs to the polyribonucleotide nucleotidyltransferase family. The cofactor is Mg(2+).

The protein localises to the cytoplasm. It carries out the reaction RNA(n+1) + phosphate = RNA(n) + a ribonucleoside 5'-diphosphate. Involved in mRNA degradation. Catalyzes the phosphorolysis of single-stranded polyribonucleotides processively in the 3'- to 5'-direction. This is Polyribonucleotide nucleotidyltransferase from Clostridium kluyveri (strain NBRC 12016).